The primary structure comprises 428 residues: Neuromedin-U receptor 1 (428 aa).

Topologically, residues 1–59 are extracellular; that stretch reads MTPPCLNCSIFPGALSPNASRSPLVCNISEFKWPYQPEDLNLTDEALRLKYLGPQQMKQ. N-linked (GlcNAc...) asparagine glycosylation is found at Asn27 and Asn41. Residues 60 to 80 traverse the membrane as a helical segment; it reads FVPICVTYLLIFVVGTLGNGL. Residues 81–96 lie on the Cytoplasmic side of the membrane; that stretch reads TCTVILRNKTMRTPTN. The chain crosses the membrane as a helical span at residues 97–117; it reads FYLFSLAVSDMLVLLVGLPLE. Over 118–137 the chain is Extracellular; that stretch reads LYEMQQNYPFQLGASACYFR. Cysteines 134 and 219 form a disulfide. The helical transmembrane segment at 138-158 threads the bilayer; sequence ILLLETVCLASVLNVTALSVE. Residues 159–181 lie on the Cytoplasmic side of the membrane; that stretch reads RYVAVVRPLQAKSVMTRAHVRRM. A helical membrane pass occupies residues 182 to 202; it reads VGAIWVLATLFSLPNTSLHGL. At 203 to 235 the chain is on the extracellular side; that stretch reads SQLTVPCRGPVPDSAICSLVGPMDFYKLVVLTT. Residues 236 to 256 traverse the membrane as a helical segment; sequence ALLFFCLPMVTISVLYLLIGL. Over 257–294 the chain is Cytoplasmic; the sequence is RLRRERMLLQVEVKGRKTAATQETSHRRIQLQDRGRRQ. The helical transmembrane segment at 295-315 threads the bilayer; that stretch reads VTKMLFALVVVFGICWAPFHA. Over 316 to 339 the chain is Extracellular; the sequence is DRIMWSLVYGHSTEGLHLAYQCVH. The helical transmembrane segment at 340-360 threads the bilayer; the sequence is IASGIFFYLGSAANPVLYSLM. Residues 361–428 lie on the Cytoplasmic side of the membrane; that stretch reads STRFRETFLQ…PGCQQETDPS (68 aa).

This sequence belongs to the G-protein coupled receptor 1 family. As to expression, ubiquitously expressed.

It is found in the cell membrane. Its function is as follows. Receptor for the neuromedin-U and neuromedin-S neuropeptides. The protein is Neuromedin-U receptor 1 (Nmur1) of Mus musculus (Mouse).